The primary structure comprises 469 residues: Glutamate--tRNA ligase 1 (469 aa).

Residues 11-21 (PSPTGHLHLGG) carry the 'HIGH' region motif. The 'KMSKS' region motif lies at 238–242 (KLSKR). Lys-241 serves as a coordination point for ATP.

The protein belongs to the class-I aminoacyl-tRNA synthetase family. Glutamate--tRNA ligase type 1 subfamily. As to quaternary structure, monomer.

The protein localises to the cytoplasm. It catalyses the reaction tRNA(Glu) + L-glutamate + ATP = L-glutamyl-tRNA(Glu) + AMP + diphosphate. Its function is as follows. Catalyzes the attachment of glutamate to tRNA(Glu) in a two-step reaction: glutamate is first activated by ATP to form Glu-AMP and then transferred to the acceptor end of tRNA(Glu). In Ehrlichia canis (strain Jake), this protein is Glutamate--tRNA ligase 1.